The following is a 110-amino-acid chain: MFGGKGGLGNLMKQAQQMQDKMQKMQEEIAQLEVTGESGAGLVKVTINGAHNCRRVEIDPSLLEDDKEMLEDLVAAAFNDAARRIEETQKEKMASVSAGMQLPPGFKMPF.

Residues 1 to 22 form a disordered region; the sequence is MFGGKGGLGNLMKQAQQMQDKM.

It belongs to the YbaB/EbfC family. In terms of assembly, homodimer.

It localises to the cytoplasm. The protein resides in the nucleoid. Binds to DNA and alters its conformation. May be involved in regulation of gene expression, nucleoid organization and DNA protection. This chain is Nucleoid-associated protein KPK_4227, found in Klebsiella pneumoniae (strain 342).